The chain runs to 202 residues: Nucleoid occlusion factor SlmA (202 aa).

In terms of domain architecture, HTH tetR-type spans 14-75 (KERQQQVLEV…ALIERIEQTL (62 aa)). Residues 38 to 57 (TTERLAKAVGVSEGALYRYF) constitute a DNA-binding region (H-T-H motif).

It belongs to the nucleoid occlusion factor SlmA family. Homodimer. Interacts with FtsZ.

It localises to the cytoplasm. Its subcellular location is the nucleoid. In terms of biological role, required for nucleoid occlusion (NO) phenomenon, which prevents Z-ring formation and cell division over the nucleoid. Acts as a DNA-associated cell division inhibitor that binds simultaneously chromosomal DNA and FtsZ, and disrupts the assembly of FtsZ polymers. SlmA-DNA-binding sequences (SBS) are dispersed on non-Ter regions of the chromosome, preventing FtsZ polymerization at these regions. This is Nucleoid occlusion factor SlmA from Actinobacillus pleuropneumoniae serotype 5b (strain L20).